Reading from the N-terminus, the 307-residue chain is Pantothenate kinase (307 aa).

87-94 (GSVAVGKS) provides a ligand contact to ATP.

This sequence belongs to the prokaryotic pantothenate kinase family.

It localises to the cytoplasm. The enzyme catalyses (R)-pantothenate + ATP = (R)-4'-phosphopantothenate + ADP + H(+). The protein operates within cofactor biosynthesis; coenzyme A biosynthesis; CoA from (R)-pantothenate: step 1/5. This Vibrio vulnificus (strain YJ016) protein is Pantothenate kinase.